The sequence spans 436 residues: Protein GOLM2 (436 aa).

Methionine 1 carries the N-acetylmethionine modification. The Cytoplasmic segment spans residues 1 to 14; the sequence is MVGFGANRRAGRLP. A helical; Signal-anchor for type II membrane protein transmembrane segment spans residues 15–35; the sequence is SLVLVVLLVVIVVLAFNYWSI. Residues 35-198 adopt a coiled-coil conformation; it reads ISSRHVLLQE…EEQKQETQKI (164 aa). Topologically, residues 36 to 436 are lumenal; it reads SSRHVLLQEE…YGKQHFNDVL (401 aa). Basic and acidic residues predominate over residues 225–247; that stretch reads ADKNEEPSSNHIPHGKEQIKRGG. Residues 225-436 form a disordered region; that stretch reads ADKNEEPSSN…YGKQHFNDVL (212 aa). Phosphoserine is present on residues serine 233 and serine 275. The segment covering 305–321 has biased composition (polar residues); that stretch reads NHNGNPGTSKQNPSSPL. A phosphoserine mark is found at serine 328 and serine 332. Basic and acidic residues predominate over residues 344-362; the sequence is ATKDRVSDFHKLKQSRFFD. Serine 366 is modified (phosphoserine). The span at 399-418 shows a compositional bias: acidic residues; that stretch reads YNEEEDGDGGEEDVQDDEER. Basic and acidic residues predominate over residues 426 to 436; the sequence is DYGKQHFNDVL.

Belongs to the GOLM family.

The protein resides in the membrane. This Homo sapiens (Human) protein is Protein GOLM2.